The following is a 121-amino-acid chain: Small ribosomal subunit protein uS13 (121 aa).

The disordered stretch occupies residues Val-97–Lys-121. Positions Gln-100–Lys-121 are enriched in basic residues.

Belongs to the universal ribosomal protein uS13 family. As to quaternary structure, part of the 30S ribosomal subunit. Forms a loose heterodimer with protein S19. Forms two bridges to the 50S subunit in the 70S ribosome.

Its function is as follows. Located at the top of the head of the 30S subunit, it contacts several helices of the 16S rRNA. In the 70S ribosome it contacts the 23S rRNA (bridge B1a) and protein L5 of the 50S subunit (bridge B1b), connecting the 2 subunits; these bridges are implicated in subunit movement. Contacts the tRNAs in the A and P-sites. The chain is Small ribosomal subunit protein uS13 from Synechococcus sp. (strain CC9311).